Here is a 501-residue protein sequence, read N- to C-terminus: DDB1- and CUL4-associated factor 12-like protein 1 (501 aa).

Over residues 1 to 37 the composition is skewed to polar residues; sequence MRQADSQTQPSPAEQETPQPAGPSNRSPPTMGPQQTG. A disordered region spans residues 1–67; sequence MRQADSQTQP…PAAPMATAGE (67 aa). WD repeat units lie at residues 185-225, 230-268, 298-337, and 384-423; these read PPSC…PVCL, GHRD…FNGS, PGNR…SRLL, and SREG…FLEE.

Belongs to the WD repeat DCAF12 family.

The polypeptide is DDB1- and CUL4-associated factor 12-like protein 1 (Dcaf12l1) (Mus musculus (Mouse)).